The following is a 402-amino-acid chain: Selenoprotein P (402 aa).

A signal peptide spans 1-19 (MWRGLGLALALCLLLTGGT). Position 59 (U59) is a non-standard amino acid, selenocysteine. N83 and N174 each carry an N-linked (GlcNAc...) asparagine glycan. The disordered stretch occupies residues 196 to 291 (KTAEASQRHH…VGSESLQPSL (96 aa)). Over residues 203–231 (RHHHPHPHSHPHPHPHPHPHPHPHPHHGH) the composition is skewed to basic residues. A run of 13 repeats spans residues 204–205 (HH), 206–207 (HP), 208–209 (HP), 210–211 (HS), 212–213 (HP), 214–215 (HP), 216–217 (HP), 218–219 (HP), 220–221 (HP), 222–223 (HP), 224–225 (HP), 226–227 (HP), and 228–229 (HH). A 13 X 2 AA tandem repeats of H-[PHS] region spans residues 204 to 229 (HHHPHPHSHPHPHPHPHPHPHPHPHH). Residues 232 to 247 (QLHENAHLSESPKPDT) show a composition bias toward basic and acidic residues. A compositionally biased stretch (basic residues) spans 259–269 (LHHHHHRHKGP). The residue at position 284 (S284) is a Phosphoserine. Non-standard amino acids (selenocysteine) are located at U297, U307, U338, U350, U363, U365, U372, U388, U390, U397, and U399. Positions 367–402 (LPPAAUQAAGQQLNPTEASTKUSUKNKAKMUKUPSN) are disordered.

Belongs to the selenoprotein P family. Phosphorylation sites are present in the extracellular medium. In terms of tissue distribution, brain and kidney. Most prominently expressed in the cerebellar cortex, hippocampus and olfactory bulb.

The protein localises to the secreted. Functionally, constitutes a major selenium pool in the brain and may play an important role in developing and/or modulating the morphology of neurons and/or glial cells. The chain is Selenoprotein P from Bos taurus (Bovine).